The primary structure comprises 942 residues: Inter alpha-trypsin inhibitor, heavy chain 4 (942 aa).

The first 28 residues, 1–28 (MKSPAPAHMWNLVLFLPSLLAVLPTTTA), serve as a signal peptide directing secretion. The 120-residue stretch at 29–148 (EKNGIDIYSL…KITFELIYQE (120 aa)) folds into the VIT domain. Asn-81 carries N-linked (GlcNAc...) asparagine glycosylation. The region spanning 274-457 (NVIFVIDKSG…LQLQDFYHEV (184 aa)) is the VWFA domain. N-linked (GlcNAc...) asparagine glycans are attached at residues Asn-517 and Asn-577. A coiled-coil region spans residues 552–586 (TIQQQLEQRISASGAELEALEAQVLNLSLKYNFVT). Disordered stretches follow at residues 658–698 (RQYI…SDFS) and 726–745 (EKSK…HPQV). Over residues 663-690 (PGFPGPPGPPGFPAPPGPPGFPAPPGPP) the composition is skewed to pro residues. O-linked (GalNAc...) threonine glycosylation is present at Thr-732. A disulfide bridge links Cys-761 with Cys-937. Asn-874 carries N-linked (GlcNAc...) asparagine glycosylation.

This sequence belongs to the ITIH family. As to quaternary structure, interacts (via C-terminus) with DNAJC1 (via SANT 2 domain). May be O-glycosylated. N-glycosylated. Highly expressed in liver. Weak expression in lung and heart.

The protein localises to the secreted. Functionally, type II acute-phase protein (APP) involved in inflammatory responses to trauma. May also play a role in liver development or regeneration. The protein is Inter alpha-trypsin inhibitor, heavy chain 4 (Itih4) of Mus musculus (Mouse).